A 1226-amino-acid polypeptide reads, in one-letter code: MGKEVRQQLEQQLKQRILLIDGGMGTMIQSYKLQEEDYRGARFVDWHCDLKGNNDLLVLTQPQIIKEIHSAYLEAGADILETNTFNSTTIAMADYDMQSLSAEINFAAAKLAREVADEWTAKDPSRPRYVAGVLGPTNRTCSISPDVNDPGFRNVTFDGLVEAYSESTRALIKGGSDLILIETIFDTLNAKACAFAVDSVFEELGISLPVMISGTITDASGRTLSGQTTEAFYNALRHVRPISFGLNCALGPDELRQYVEELSRISECYVSAHPNAGLPNAFGEYDLSAEEMAEHIAEWAQAGFLNLVGGCCGTTPEHIAAIAKAVEGVKPRALPDLKVECRLSGLEPLNIGPETLFVNVGERTNVTGSARFKRLIKEEQYDEALDVAREQVENGAQIIDINMDEGMLDAEACMVRFLNLCASEPEISKVPVMVDSSKWEVIEAGLKCIQGKGIVNSISLKEGKEKFIAQAKLVRRYGAAVIVMAFDEVGQADTRERKLEICRRAYHILVDEVGFPPEDIIFDPNIFAVATGIDEHNNYALDFINAVADIKRELPHAMISGGVSNVSFSFRGNNYVREAIHAVFLYHCFKHGMDMGIVNAGQLEIYDNVPLKLREAVEDVILNRRSDGTERLLEIAEAYRENSVGKEEDASALEWRAWPVAKRLEHALVKGITEFIVQDTEEARQQASKPLEVIEGPLMDGMNVVGDLFGEGKMFLPQVVKSARVMKQAVAYLEPFINAQKSGSTSNGKILLATVKGDVHDIGKNIVGVVLQCNNFEIIDLGVMVPCEQILKVAREQNVDIIGLSGLITPSLDEMVHVAKEMERQGFELPLLIGGATTSKAHTAVKIEQNYHAPVVYVNNASRAVGVCTSLLSDEQRPGFIERLDLDYERTRDQHARKTPKSRPVTLEQARANKAALDWANYTPPAPAKPGVHVFENIALATLRPYIDWTPFFMTWSLMGKYPAILEHEEVGEEAKRLFHDANALLDKVEREGLLKASGMCALFPAASVGDDIEVYSDESRTQVAHVLYNLRQQTEKPKGANYCLSDYVAPKESGKRDWIGAFAVTGGIGERALADAYKAQGDDYNAIMIQAVADRLAEAFAEYLHEKVRKEIWGYASDENLSNDDLIRERYQGIRPAPGYPACPEHTEKATLWQMLNVEETIGMSLTTSYAMWPGASVSGWYFSHPDSRYFAVAQIQPDQLHSYAERKGWRLEEAEKWLAPNLDA.

The Hcy-binding domain maps to 6–326 (RQQLEQQLKQ…EHIAAIAKAV (321 aa)). 3 residues coordinate Zn(2+): C248, C311, and C312. The region spanning 357–618 (FVNVGERTNV…VPLKLREAVE (262 aa)) is the Pterin-binding domain. In terms of domain architecture, B12-binding N-terminal spans 651–745 (SALEWRAWPV…FINAQKSGST (95 aa)). Methylcob(III)alamin is bound by residues E695, 757–761 (GDVHD), H760, S805, T809, and A861. The B12-binding domain maps to 747-882 (NGKILLATVK…SDEQRPGFIE (136 aa)). The 329-residue stretch at 898–1226 (KTPKSRPVTL…EKWLAPNLDA (329 aa)) folds into the AdoMet activation domain. Residues D948, R1136, and 1191–1192 (YF) contribute to the S-adenosyl-L-methionine site.

This sequence belongs to the vitamin-B12 dependent methionine synthase family. Methylcob(III)alamin serves as cofactor. It depends on Zn(2+) as a cofactor.

It catalyses the reaction (6S)-5-methyl-5,6,7,8-tetrahydrofolate + L-homocysteine = (6S)-5,6,7,8-tetrahydrofolate + L-methionine. The protein operates within amino-acid biosynthesis; L-methionine biosynthesis via de novo pathway; L-methionine from L-homocysteine (MetH route): step 1/1. Catalyzes the transfer of a methyl group from methyl-cobalamin to homocysteine, yielding enzyme-bound cob(I)alamin and methionine. Subsequently, remethylates the cofactor using methyltetrahydrofolate. This Vibrio cholerae serotype O1 (strain ATCC 39315 / El Tor Inaba N16961) protein is Methionine synthase (metH).